The sequence spans 323 residues: DNA-directed RNA polymerase subunit alpha 1 (323 aa).

Positions 1 to 228 (MSNNNSKLEF…EQISVFVSLR (228 aa)) are alpha N-terminal domain (alpha-NTD). An alpha C-terminal domain (alpha-CTD) region spans residues 244–323 (IDPILLKPID…DNFRELVEGK (80 aa)).

It belongs to the RNA polymerase alpha chain family. In terms of assembly, homodimer. The RNAP catalytic core consists of 2 alpha, 1 beta, 1 beta' and 1 omega subunit. When a sigma factor is associated with the core the holoenzyme is formed, which can initiate transcription.

The catalysed reaction is RNA(n) + a ribonucleoside 5'-triphosphate = RNA(n+1) + diphosphate. In terms of biological role, DNA-dependent RNA polymerase catalyzes the transcription of DNA into RNA using the four ribonucleoside triphosphates as substrates. This Francisella tularensis subsp. tularensis (strain FSC 198) protein is DNA-directed RNA polymerase subunit alpha 1.